A 153-amino-acid chain; its full sequence is MIMEIRKIGDPILKIKAKKVEKIDEKVKNLVRDMIETMKFSNGVGLAAPQVGESLRIIVVDYEENPIAFINPEILEMDGEVLDYEGCLSVPGVEVPIKRAERIIFKAQDLQGRTKRYKAKGLLARVIQHEVDHLEGILILDRAVEESTLAEEK.

The Fe cation site is built by Cys-87 and His-129. Residue Glu-130 is part of the active site. Residue His-133 coordinates Fe cation.

The protein belongs to the polypeptide deformylase family. The cofactor is Fe(2+).

It carries out the reaction N-terminal N-formyl-L-methionyl-[peptide] + H2O = N-terminal L-methionyl-[peptide] + formate. In terms of biological role, removes the formyl group from the N-terminal Met of newly synthesized proteins. Requires at least a dipeptide for an efficient rate of reaction. N-terminal L-methionine is a prerequisite for activity but the enzyme has broad specificity at other positions. The chain is Peptide deformylase from Dictyoglomus turgidum (strain DSM 6724 / Z-1310).